The sequence spans 171 residues: uncharacterized protein (171 aa).

The protein to M.jannaschii MJ0417.

This is an uncharacterized protein from Methanocaldococcus jannaschii (strain ATCC 43067 / DSM 2661 / JAL-1 / JCM 10045 / NBRC 100440) (Methanococcus jannaschii).